Consider the following 523-residue polypeptide: NAD(P) transhydrogenase subunit alpha (523 aa).

Topologically, residues 1-411 (MKIGAPREIF…AEIATFRKQT (411 aa)) are cytoplasmic. NAD(+) is bound by residues 127-130 (QKMD), Val177, 197-199 (DVR), and Gly229. Transmembrane regions (helical) follow at residues 412–432 (VSQVAMLAVGTALLLFVGMYA) and 433–455 (PPSFMAHFIVFALACFVGFQVIW). Over 456–464 (NVSHSLHTP) the chain is Cytoplasmic. The helical transmembrane segment at 465 to 485 (LMAVTNAISGIVILGALLQIG) threads the bilayer. Residues 486–489 (SGNV) lie on the Periplasmic side of the membrane. The chain crosses the membrane as a helical span at residues 490–510 (LVVLLAAISVLIATINIVGGF). At 511–523 (LVTRRMLAMFQKS) the chain is on the cytoplasmic side.

Belongs to the AlaDH/PNT family. Heterodimer of an alpha (PntA) and a beta (PntB) chain.

Its subcellular location is the cell inner membrane. The enzyme catalyses NAD(+) + NADPH + H(+)(in) = NADH + NADP(+) + H(+)(out). Its function is as follows. The transhydrogenation between NADH and NADP is coupled to respiration and ATP hydrolysis and functions as a proton pump across the membrane. In Cereibacter sphaeroides (Rhodobacter sphaeroides), this protein is NAD(P) transhydrogenase subunit alpha.